Consider the following 214-residue polypeptide: Imidazole glycerol phosphate synthase subunit HisH 2 (214 aa).

The 209-residue stretch at 2 to 210 (KIVIIDYDMG…LDWVKIQKLG (209 aa)) folds into the Glutamine amidotransferase type-1 domain. Residue Cys-82 is the Nucleophile of the active site. Catalysis depends on residues His-185 and Glu-187.

In terms of assembly, heterodimer of HisH and HisF.

It is found in the cytoplasm. It carries out the reaction 5-[(5-phospho-1-deoxy-D-ribulos-1-ylimino)methylamino]-1-(5-phospho-beta-D-ribosyl)imidazole-4-carboxamide + L-glutamine = D-erythro-1-(imidazol-4-yl)glycerol 3-phosphate + 5-amino-1-(5-phospho-beta-D-ribosyl)imidazole-4-carboxamide + L-glutamate + H(+). The enzyme catalyses L-glutamine + H2O = L-glutamate + NH4(+). Its pathway is amino-acid biosynthesis; L-histidine biosynthesis; L-histidine from 5-phospho-alpha-D-ribose 1-diphosphate: step 5/9. Its function is as follows. IGPS catalyzes the conversion of PRFAR and glutamine to IGP, AICAR and glutamate. The HisH subunit provides the glutamine amidotransferase activity that produces the ammonia necessary to HisF for the synthesis of IGP and AICAR. The polypeptide is Imidazole glycerol phosphate synthase subunit HisH 2 (hisH2) (Vibrio vulnificus (strain YJ016)).